The sequence spans 323 residues: Di/tripeptide transport ATP-binding protein DppF (323 aa).

Positions 5–254 (LTARDLTRHY…PLHPYTRALL (250 aa)) constitute an ABC transporter domain. 47–54 (GESGCGKS) is a binding site for ATP.

It belongs to the ABC transporter superfamily. In terms of assembly, the complex is composed of two ATP-binding proteins (DppD and DppF), two transmembrane proteins (DppB and DppC) and a solute-binding protein (DppA1-A5). Five orthologous SBPs (DppA1-A5) are present in P.aeruginosa, which increases the substrate specificity of the DppBCDF transporter.

It localises to the cell inner membrane. It carries out the reaction a dipeptide(out) + ATP + H2O = a dipeptide(in) + ADP + phosphate + H(+). In terms of biological role, part of the ABC transporter DppABCDF involved in the uptake of various di/tripeptides. Is also involved in the uptake of phaseolotoxin, a toxic tripeptide inhibiting the enzyme ornithine carbamoyltransferase. Responsible for energy coupling to the transport system. The protein is Di/tripeptide transport ATP-binding protein DppF of Pseudomonas aeruginosa (strain UCBPP-PA14).